Consider the following 165-residue polypeptide: Xanthine-guanine phosphoribosyltransferase (165 aa).

5-phospho-alpha-D-ribose 1-diphosphate contacts are provided by residues 41-42 and 98-106; these read RG and DDLTDTGKT. Asp-99 provides a ligand contact to Mg(2+). Positions 102 and 145 each coordinate guanine. Positions 102 and 145 each coordinate xanthine. GMP-binding positions include 102–106 and 144–145; these read DTGKT and WI.

The protein belongs to the purine/pyrimidine phosphoribosyltransferase family. XGPT subfamily. As to quaternary structure, homotetramer. Mg(2+) serves as cofactor.

The protein localises to the cell inner membrane. It carries out the reaction GMP + diphosphate = guanine + 5-phospho-alpha-D-ribose 1-diphosphate. The enzyme catalyses XMP + diphosphate = xanthine + 5-phospho-alpha-D-ribose 1-diphosphate. The catalysed reaction is IMP + diphosphate = hypoxanthine + 5-phospho-alpha-D-ribose 1-diphosphate. It functions in the pathway purine metabolism; GMP biosynthesis via salvage pathway; GMP from guanine: step 1/1. It participates in purine metabolism; XMP biosynthesis via salvage pathway; XMP from xanthine: step 1/1. Purine salvage pathway enzyme that catalyzes the transfer of the ribosyl-5-phosphate group from 5-phospho-alpha-D-ribose 1-diphosphate (PRPP) to the N9 position of the 6-oxopurines guanine and xanthine to form the corresponding ribonucleotides GMP (guanosine 5'-monophosphate) and XMP (xanthosine 5'-monophosphate), with the release of PPi. To a lesser extent, also acts on hypoxanthine. The polypeptide is Xanthine-guanine phosphoribosyltransferase (Brucella anthropi (strain ATCC 49188 / DSM 6882 / CCUG 24695 / JCM 21032 / LMG 3331 / NBRC 15819 / NCTC 12168 / Alc 37) (Ochrobactrum anthropi)).